The following is a 305-amino-acid chain: Aspartate carbamoyltransferase catalytic subunit (305 aa).

Residues R51 and T52 each contribute to the carbamoyl phosphate site. An L-aspartate-binding site is contributed by K79. Carbamoyl phosphate is bound by residues R101, H129, and Q132. L-aspartate-binding residues include R165 and R220. Carbamoyl phosphate is bound by residues G258 and P259.

It belongs to the aspartate/ornithine carbamoyltransferase superfamily. ATCase family. In terms of assembly, heterododecamer (2C3:3R2) of six catalytic PyrB chains organized as two trimers (C3), and six regulatory PyrI chains organized as three dimers (R2).

It carries out the reaction carbamoyl phosphate + L-aspartate = N-carbamoyl-L-aspartate + phosphate + H(+). It participates in pyrimidine metabolism; UMP biosynthesis via de novo pathway; (S)-dihydroorotate from bicarbonate: step 2/3. Functionally, catalyzes the condensation of carbamoyl phosphate and aspartate to form carbamoyl aspartate and inorganic phosphate, the committed step in the de novo pyrimidine nucleotide biosynthesis pathway. The sequence is that of Aspartate carbamoyltransferase catalytic subunit from Rubrobacter xylanophilus (strain DSM 9941 / JCM 11954 / NBRC 16129 / PRD-1).